A 159-amino-acid chain; its full sequence is FCS-Like Zinc finger 2 (159 aa).

The FLZ-type zinc finger occupies 75 to 119 (HFLDSCFLCKKRLGDNRDIFMYRGDTPFCSEECREEQIERDEAKE). Residues 113-122 (ERDEAKEKKQ) are compositionally biased toward basic and acidic residues. Residues 113-159 (ERDEAKEKKQSLSTSVKAMRRNEKRSSSSSPTRSRNYAFRTGTVAAA) are disordered.

It belongs to the FLZ family. As to quaternary structure, interacts with KIN10 and KIN11 via its FLZ-type zinc finger domain. Interacts with KINB1, KINB2, KINB3 and SNF4 via its N-terminal part. Forms heterodimer with FLZ7, FLZ10, FLZ11, FLZ12, FLZ15, FLZ17 and FLZ18 in vitro.

Functionally, may act as an adapter to facilitate the interaction of SnRK1 complex with effector proteins, conferring tissue- and stimulus-type specific differences in the SnRK1 regulation pathway. The chain is FCS-Like Zinc finger 2 from Arabidopsis thaliana (Mouse-ear cress).